The chain runs to 417 residues: NADH-quinone oxidoreductase subunit D (417 aa).

The protein belongs to the complex I 49 kDa subunit family. In terms of assembly, NDH-1 is composed of 14 different subunits. Subunits NuoB, C, D, E, F, and G constitute the peripheral sector of the complex.

The protein resides in the cell inner membrane. The enzyme catalyses a quinone + NADH + 5 H(+)(in) = a quinol + NAD(+) + 4 H(+)(out). In terms of biological role, NDH-1 shuttles electrons from NADH, via FMN and iron-sulfur (Fe-S) centers, to quinones in the respiratory chain. The immediate electron acceptor for the enzyme in this species is believed to be ubiquinone. Couples the redox reaction to proton translocation (for every two electrons transferred, four hydrogen ions are translocated across the cytoplasmic membrane), and thus conserves the redox energy in a proton gradient. This is NADH-quinone oxidoreductase subunit D from Burkholderia cenocepacia (strain HI2424).